The sequence spans 401 residues: Glutamyl-tRNA reductase (401 aa).

Residues 45-48 (TCNR), Ser101, 106-108 (EDQ), and Gln112 each bind substrate. The active-site Nucleophile is the Cys46. Residue 177–182 (GYGDVG) participates in NADP(+) binding.

Belongs to the glutamyl-tRNA reductase family. In terms of assembly, homodimer.

The catalysed reaction is (S)-4-amino-5-oxopentanoate + tRNA(Glu) + NADP(+) = L-glutamyl-tRNA(Glu) + NADPH + H(+). It functions in the pathway porphyrin-containing compound metabolism; protoporphyrin-IX biosynthesis; 5-aminolevulinate from L-glutamyl-tRNA(Glu): step 1/2. Its function is as follows. Catalyzes the NADPH-dependent reduction of glutamyl-tRNA(Glu) to glutamate 1-semialdehyde (GSA). The protein is Glutamyl-tRNA reductase of Clostridium botulinum (strain Alaska E43 / Type E3).